Reading from the N-terminus, the 270-residue chain is Chromo domain-containing protein cec-4 (270 aa).

2 disordered regions span residues 1-24 (MAKKTVEGEHGTPKTNFTKKETSK) and 143-229 (KIAQ…KNDV). Residues 87–147 (YAVERVLAHR…HQEDLKIAQT (61 aa)) form the Chromo domain. Basic residues-rich tracts occupy residues 151–167 (TPSKTPKKTPKSLKRRA) and 187–197 (TPKQSTKKLKR). Over residues 205-229 (LVEKSKKKAIPDLENHTLDQEKNDV) the composition is skewed to basic and acidic residues.

In terms of assembly, interacts with mono-, di- and tri-methylated 'Lys-9' residues on histone H3. Weakly interacts with methylated 'Lys-37' residues on histone H3.

The protein resides in the nucleus inner membrane. Its subcellular location is the membrane. Functionally, chromatin anchor protein which binds to methylated lysine residues on histone H3, thereby recruiting heterochromatin to the nuclear periphery, especially in embryonic cells, with a lesser role in differentiated cells. May be required for the correct positioning of chromatin and nucleoli in embryos. In Caenorhabditis elegans, this protein is Chromo domain-containing protein cec-4.